We begin with the raw amino-acid sequence, 315 residues long: Fe(3+)-citrate-binding protein YfmC (315 aa).

A signal peptide spans 1 to 18; the sequence is MRTYSNKLIAIMSVLLLA. Cysteine 19 carries N-palmitoyl cysteine lipidation. Cysteine 19 carries S-diacylglycerol cysteine lipidation. The segment covering 27–36 has biased composition (low complexity); it reads SSQNNNGSGK. Residues 27–52 form a disordered region; sequence SSQNNNGSGKSESKDSRVIHDEEGKT. Positions 37–51 are enriched in basic and acidic residues; the sequence is SESKDSRVIHDEEGK. Residues 60–315 form the Fe/B12 periplasmic-binding domain; that stretch reads RVVVLELSFL…KDVLKKVYNK (256 aa).

The protein belongs to the bacterial solute-binding protein 8 family. The complex is composed of one ATP-binding protein (YfmF), two transmembrane proteins (YfmD and YfmE) and a solute-binding protein (YfmC).

It localises to the cell membrane. Functionally, part of the ABC transporter complex YfmCDEF involved in citrate-dependent Fe(3+) import. Binds citrate-dependent Fe(3+) and delivers it to the surface of YfmDE. This chain is Fe(3+)-citrate-binding protein YfmC (yfmC), found in Bacillus subtilis (strain 168).